Here is a 355-residue protein sequence, read N- to C-terminus: Arginine kinase (355 aa).

The region spanning 6–90 (TLEKLEAGFS…FDPIIEDYHN (85 aa)) is the Phosphagen kinase N-terminal domain. 63-67 (GVGIY) serves as a coordination point for substrate. The Phosphagen kinase C-terminal domain maps to 118–355 (FVVSTRVRCG…AELIKIEKSL (238 aa)). ATP-binding positions include 121–125 (STRVR) and histidine 184. Residue glutamate 224 participates in substrate binding. ATP is bound at residue arginine 228. Residue cysteine 270 coordinates substrate. Residues 279-283 (RASVH) and 308-313 (RGTRGE) each bind ATP. Glutamate 313 contacts substrate.

The protein belongs to the ATP:guanido phosphotransferase family.

It catalyses the reaction L-arginine + ATP = N(omega)-phospho-L-arginine + ADP + H(+). The chain is Arginine kinase (ARGK) from Plodia interpunctella (Indianmeal moth).